Here is an 853-residue protein sequence, read N- to C-terminus: Tetratricopeptide repeat protein 27 homolog (853 aa).

The segment at 324 to 345 (RQRDDSGDGDNNNEFNRNSSIK) is disordered. Polar residues predominate over residues 332-342 (GDNNNEFNRNS). TPR repeat units lie at residues 486–519 (IGAA…SRSE), 525–558 (RLEI…SKKR), 560–593 (SRAQ…NPLF), 594–627 (PNSW…EPEE), 629–661 (EGWA…KREN), and 662–695 (WKMW…NDKK).

Belongs to the TTC27 family.

This chain is Tetratricopeptide repeat protein 27 homolog (ttc27), found in Dictyostelium discoideum (Social amoeba).